A 214-amino-acid polypeptide reads, in one-letter code: UPF0502 protein Acid345_3645 (214 aa).

This sequence belongs to the UPF0502 family.

This chain is UPF0502 protein Acid345_3645, found in Koribacter versatilis (strain Ellin345).